The sequence spans 640 residues: Portal protein (640 aa).

This sequence belongs to the herpesviridae portal protein family. In terms of assembly, homododecamerizes. Interacts with terminase subunits TRM1 and TRM3.

The protein localises to the virion. The protein resides in the host nucleus. In terms of biological role, forms a portal in the viral capsid through which viral DNA is translocated during DNA packaging. Assembles as a dodecamer at a single fivefold axe of the T=16 icosahedric capsid. Binds to the molecular motor that translocates the viral DNA, termed terminase. The polypeptide is Portal protein (U76) (Human herpesvirus 7 (strain JI) (HHV-7)).